The primary structure comprises 196 residues: Ribonuclease HII (196 aa).

The region spanning 13–196 (LLVAGVDEAG…SFSPLKKKLF (184 aa)) is the RNase H type-2 domain. A divalent metal cation contacts are provided by D19, E20, and D111.

Belongs to the RNase HII family. Requires Mn(2+) as cofactor. Mg(2+) is required as a cofactor.

The protein localises to the cytoplasm. It carries out the reaction Endonucleolytic cleavage to 5'-phosphomonoester.. Endonuclease that specifically degrades the RNA of RNA-DNA hybrids. This Aquifex aeolicus (strain VF5) protein is Ribonuclease HII (rnhB).